A 194-amino-acid polypeptide reads, in one-letter code: ATP-dependent Clp protease proteolytic subunit (194 aa).

The Nucleophile role is filled by Ser98. The active site involves His123.

This sequence belongs to the peptidase S14 family. As to quaternary structure, fourteen ClpP subunits assemble into 2 heptameric rings which stack back to back to give a disk-like structure with a central cavity, resembling the structure of eukaryotic proteasomes.

It localises to the cytoplasm. It carries out the reaction Hydrolysis of proteins to small peptides in the presence of ATP and magnesium. alpha-casein is the usual test substrate. In the absence of ATP, only oligopeptides shorter than five residues are hydrolyzed (such as succinyl-Leu-Tyr-|-NHMec, and Leu-Tyr-Leu-|-Tyr-Trp, in which cleavage of the -Tyr-|-Leu- and -Tyr-|-Trp bonds also occurs).. Functionally, cleaves peptides in various proteins in a process that requires ATP hydrolysis. Has a chymotrypsin-like activity. Plays a major role in the degradation of misfolded proteins. The protein is ATP-dependent Clp protease proteolytic subunit of Sodalis glossinidius (strain morsitans).